Reading from the N-terminus, the 222-residue chain is MVKYLVAQGVNVDAQNSRALCLACKYGYINIAYFLMHEGANIYANDNHPIRLAAEYGHLSIVKLLIYHNANIRAVEDSALRMAAKRNKLEVVKYIIEKIGTNYEYSDYPLAYAAGKGHIEMIEYLLSIGEKITDYAMFMAINNGHVGTVKYLIDESQSLPCISYSELAKITRKGHLEMIKLLNNRGIKINKIVNTTIINETIEKERWEILEYFNKIGVNNNC.

ANK repeat units follow at residues 1 to 14, 15 to 44, 45 to 74, 76 to 104, 105 to 134, 136 to 161, and 163 to 191; these read MVKYLVAQGVNVDA, QNSRALCLACKYGYINIAYFLMHEGANIYA, NDNHPIRLAAEYGHLSIVKLLIYHNANIRA, EDSALRMAAKRNKLEVVKYIIEKIGTNYE, YSDYPLAYAAGKGHIEMIEYLLSIGEKITD, AMFMAINNGHVGTVKYLIDESQSLPC, and SYSELAKITRKGHLEMIKLLNNRGIKINK.

The polypeptide is Putative ankyrin repeat protein L36 (Acanthamoeba polyphaga (Amoeba)).